Reading from the N-terminus, the 367-residue chain is Pectate trisaccharide-lyase (367 aa).

Residues 1 to 27 (MLMRFSRVVSLVLLLVFTAVLTGAVKA) form the signal peptide. Positions 144, 166, and 170 each coordinate Ca(2+). The stretch at 151 to 173 (SHHIWIDHCTFVNGNDGAVDIKK) is one PbH1 1 repeat. Arginine 224 is a catalytic residue. Residues 263-289 (GAKVHVEGNYFMGYGAVMAEAGIAFLP) form a PbH1 2 repeat.

Belongs to the polysaccharide lyase 1 family. In terms of assembly, homotetramer. Requires Ca(2+) as cofactor.

Its subcellular location is the secreted. The enzyme catalyses eliminative cleavage of unsaturated trigalacturonate as the major product from the reducing end of polygalacturonic acid/pectate.. Its activity is regulated as follows. Completely inactivated by EGTA. In terms of biological role, cleaves unsaturated trigalacturonate from pectin. Activity is highest towards polygalacturonic acid, activity on methylated pectins decreases with an increasing degree of methylation. The chain is Pectate trisaccharide-lyase from Thermotoga maritima (strain ATCC 43589 / DSM 3109 / JCM 10099 / NBRC 100826 / MSB8).